Here is a 451-residue protein sequence, read N- to C-terminus: Acetylornithine aminotransferase, mitochondrial (451 aa).

N6-(pyridoxal phosphate)lysine is present on K302.

Belongs to the class-III pyridoxal-phosphate-dependent aminotransferase family. Requires pyridoxal 5'-phosphate as cofactor. In terms of tissue distribution, found at highest levels in nodules, confined to the infected cells.

Its subcellular location is the mitochondrion. It catalyses the reaction N(2)-acetyl-L-ornithine + 2-oxoglutarate = N-acetyl-L-glutamate 5-semialdehyde + L-glutamate. It functions in the pathway amino-acid biosynthesis; L-arginine biosynthesis; N(2)-acetyl-L-ornithine from L-glutamate: step 4/4. In terms of biological role, involved in the biosynthesis of citrulline. This Alnus glutinosa (European alder) protein is Acetylornithine aminotransferase, mitochondrial (AG118).